The following is a 453-amino-acid chain: Flavonol-3-O-rhamnosyltransferase (453 aa).

His-24 functions as the Proton acceptor in the catalytic mechanism. Residue His-24 participates in an anthocyanidin binding. Catalysis depends on Asp-119, which acts as the Charge relay. His-150 is a binding site for an anthocyanidin. UDP-beta-L-rhamnose is bound by residues Thr-280, Ala-333, His-350, Asn-354, Ser-355, and Glu-358. Residue Ala-373 participates in an anthocyanidin binding.

This sequence belongs to the UDP-glycosyltransferase family. Expressed in leaves, flowers, siliques, and stems. Expressed in the shoot apex.

It catalyses the reaction kaempferol + UDP-beta-L-rhamnose = kaempferol 3-O-alpha-L-rhamnoside + UDP + H(+). It carries out the reaction UDP-beta-L-rhamnose + quercetin = quercitrin + UDP + H(+). It functions in the pathway flavonoid metabolism. In terms of biological role, flavonol 3-O-rhamnosyltransferase that catalyzes the transfer of rhamnose from UDP-rhamnose to the 3-OH position of kaempferol and quercetin. Possesses low quercetin 3-O-glucosyltransferase activity in vitro. This Arabidopsis thaliana (Mouse-ear cress) protein is Flavonol-3-O-rhamnosyltransferase.